Here is a 134-residue protein sequence, read N- to C-terminus: Small ribosomal subunit protein uS9c (134 aa).

The protein belongs to the universal ribosomal protein uS9 family.

The protein localises to the plastid. Its subcellular location is the chloroplast. The sequence is that of Small ribosomal subunit protein uS9c (rps9) from Thalassiosira pseudonana (Marine diatom).